We begin with the raw amino-acid sequence, 136 residues long: Ribonuclease VapC1 (136 aa).

Residues 18-129 (ILVDTSVLID…KKHFERLKEF (112 aa)) form the PINc domain. Mg(2+)-binding residues include D21 and D101.

It belongs to the PINc/VapC protein family. Mg(2+) serves as cofactor.

In terms of biological role, toxic component of a type II toxin-antitoxin (TA) system. An RNase. Its cognate antitoxin is VapB1. This Methanocaldococcus jannaschii (strain ATCC 43067 / DSM 2661 / JAL-1 / JCM 10045 / NBRC 100440) (Methanococcus jannaschii) protein is Ribonuclease VapC1.